Consider the following 1072-residue polypeptide: Carbamoyl phosphate synthase large chain (1072 aa).

Residues 1–401 are carboxyphosphate synthetic domain; sequence MPKRLDINTI…SLLKAVRSLE (401 aa). 12 residues coordinate ATP: Arg-129, Arg-169, Gly-175, Gly-176, Lys-208, Ile-210, Glu-215, Gly-241, Val-242, His-243, Gln-284, and Glu-298. One can recognise an ATP-grasp 1 domain in the interval 133 to 327; sequence RTLMQELNEP…IAKLAAKIAV (195 aa). 3 residues coordinate Mg(2+): Gln-284, Glu-298, and Asn-300. The Mn(2+) site is built by Gln-284, Glu-298, and Asn-300. Positions 402 to 546 are oligomerization domain; it reads LGIYHLELDH…YSTYADENES (145 aa). The carbamoyl phosphate synthetic domain stretch occupies residues 547 to 929; the sequence is IVTDRKSVVV…ALYKGLVASG (383 aa). The region spanning 671 to 861 is the ATP-grasp 2 domain; that stretch reads EAALTKLGIP…MANVATKVIL (191 aa). Residues Arg-707, Arg-746, Glu-752, Gly-777, Val-778, His-779, Ser-780, Gln-820, and Glu-832 each coordinate ATP. The Mg(2+) site is built by Gln-820, Glu-832, and Asn-834. Residues Gln-820, Glu-832, and Asn-834 each contribute to the Mn(2+) site. An MGS-like domain is found at 930 to 1072; it reads INIPTHGSVI…QTKRHEVVHA (143 aa). The interval 930 to 1072 is allosteric domain; the sequence is INIPTHGSVI…QTKRHEVVHA (143 aa).

This sequence belongs to the CarB family. As to quaternary structure, composed of two chains; the small (or glutamine) chain promotes the hydrolysis of glutamine to ammonia, which is used by the large (or ammonia) chain to synthesize carbamoyl phosphate. Tetramer of heterodimers (alpha,beta)4. The cofactor is Mg(2+). Mn(2+) serves as cofactor.

The catalysed reaction is hydrogencarbonate + L-glutamine + 2 ATP + H2O = carbamoyl phosphate + L-glutamate + 2 ADP + phosphate + 2 H(+). It carries out the reaction hydrogencarbonate + NH4(+) + 2 ATP = carbamoyl phosphate + 2 ADP + phosphate + 2 H(+). It participates in amino-acid biosynthesis; L-arginine biosynthesis; carbamoyl phosphate from bicarbonate: step 1/1. The protein operates within pyrimidine metabolism; UMP biosynthesis via de novo pathway; (S)-dihydroorotate from bicarbonate: step 1/3. Its function is as follows. Large subunit of the glutamine-dependent carbamoyl phosphate synthetase (CPSase). CPSase catalyzes the formation of carbamoyl phosphate from the ammonia moiety of glutamine, carbonate, and phosphate donated by ATP, constituting the first step of 2 biosynthetic pathways, one leading to arginine and/or urea and the other to pyrimidine nucleotides. The large subunit (synthetase) binds the substrates ammonia (free or transferred from glutamine from the small subunit), hydrogencarbonate and ATP and carries out an ATP-coupled ligase reaction, activating hydrogencarbonate by forming carboxy phosphate which reacts with ammonia to form carbamoyl phosphate. The sequence is that of Carbamoyl phosphate synthase large chain from Bacillus thuringiensis subsp. konkukian (strain 97-27).